Consider the following 322-residue polypeptide: MKIGNYQLKNNLIVAPMAGVTDRPFRELCLRYGAGMAVSEMMSCNPALWKTAKSQNRMVHEGESGIRSVQIAGSDPQLMAEAAQFSVENGAQIIDINMGCPAKKVNKKLAGSALLRYPDVIEDILKAVVNAVNVPVTLKTRTGWDTDNKNCLSIAQLAEDCGIQALALHGRTRACMYKGEAEYDSIKAVKAAVSIPVIANGDIDSPEKARYVLEYTGADALMIGRPAQGRPWIFQEIQHFLEHGTTMPELPISEVKDIMLGHVTALHQFYGEYLGPRIARKHVSWYLQEHEQASAFRRTFNAIETADQQLDALEGYFDNVAS.

Residues 16 to 18 (PMA) and glutamine 70 contribute to the FMN site. Cysteine 100 acts as the Proton donor in catalysis. FMN is bound by residues lysine 139, 200–202 (NGD), and 224–225 (GR).

Belongs to the Dus family. DusB subfamily. FMN is required as a cofactor.

It catalyses the reaction a 5,6-dihydrouridine in tRNA + NAD(+) = a uridine in tRNA + NADH + H(+). The catalysed reaction is a 5,6-dihydrouridine in tRNA + NADP(+) = a uridine in tRNA + NADPH + H(+). Functionally, catalyzes the synthesis of 5,6-dihydrouridine (D), a modified base found in the D-loop of most tRNAs, via the reduction of the C5-C6 double bond in target uridines. This Vibrio cholerae serotype O1 (strain ATCC 39315 / El Tor Inaba N16961) protein is tRNA-dihydrouridine synthase B.